The following is a 208-amino-acid chain: MTQGFFISFEGGEGAGKSTQIRRLADRLKAAGHDVIVTREPGGSPGAEAIRELLVNGAADRWSPVTESLLMYAARRDHIERVIRPGLARGAVVLCDRFADSTRAYQGAGGDAPASLIAALEEHVLGGTVPVLTLILDLPAEVGLQRAEARGGAARFESKGLAFHERLRAGYLEIARREPDRCVVIDADAELDAVTAAISDVVVQRLGL.

11–18 provides a ligand contact to ATP; it reads GGEGAGKS.

Belongs to the thymidylate kinase family.

It catalyses the reaction dTMP + ATP = dTDP + ADP. Functionally, phosphorylation of dTMP to form dTDP in both de novo and salvage pathways of dTTP synthesis. The protein is Thymidylate kinase (tmk) of Caulobacter vibrioides (strain ATCC 19089 / CIP 103742 / CB 15) (Caulobacter crescentus).